The following is a 65-amino-acid chain: Large ribosomal subunit protein bL35 (65 aa).

Belongs to the bacterial ribosomal protein bL35 family.

The sequence is that of Large ribosomal subunit protein bL35 from Neisseria meningitidis serogroup A / serotype 4A (strain DSM 15465 / Z2491).